Here is a 1503-residue protein sequence, read N- to C-terminus: ATP-binding cassette sub-family C member 6 (1503 aa).

Residues 1–31 are Extracellular-facing; sequence MAAPAEPCAGQGVWNQTEPEPAATSLLSLCF. A glycan (N-linked (GlcNAc...) asparagine) is linked at Asn-15. The helical transmembrane segment at 32–52 threads the bilayer; the sequence is LRTAGVWVPPMYLWVLGPIYL. The Cytoplasmic segment spans residues 53–72; it reads LFIHHHGRGYLRMSPLFKAK. A helical transmembrane segment spans residues 73–93; it reads MVLGFALIVLCTSSVAVALWK. Topologically, residues 94 to 98 are extracellular; it reads IQQGT. A helical membrane pass occupies residues 99-119; sequence PEAPEFLIHPTVWLTTMSFAV. Over 120–131 the chain is Cytoplasmic; that stretch reads FLIHTERKKGVQ. A helical transmembrane segment spans residues 132-149; it reads SSGVLFGYWLLCFVLPAT. The Extracellular segment spans residues 150-167; the sequence is NAAQQASGAGFQSDPVRH. A helical transmembrane segment spans residues 168–188; sequence LSTYLCLSLVVAQFVLSCLAD. The Cytoplasmic segment spans residues 189 to 302; it reads QPPFFPEDPQ…GSQWRPLLKA (114 aa). A helical membrane pass occupies residues 303–323; that stretch reads IWQVFHSTFLLGTLSLIISDV. Residues 311–593 enclose the ABC transmembrane type-1 1 domain; sequence FLLGTLSLII…LPFSIHSLVQ (283 aa). At 324 to 349 the chain is on the extracellular side; it reads FRFTVPKLLSLFLEFIGDPKPPAWKG. Residues 350–370 traverse the membrane as a helical segment; it reads YLLAVLMFLSACLQTLFEQQN. Over 371-426 the chain is Cytoplasmic; the sequence is MYRLKVLQMRLRSAITGLVYRKVLALSSGSRKASAVGDVVNLVSVDVQRLTESVLY. A helical membrane pass occupies residues 427 to 447; that stretch reads LNGLWLPLVWIVVCFVYLWQL. Over 448 to 450 the chain is Extracellular; the sequence is LGP. A helical membrane pass occupies residues 451-471; it reads SALTAIAVFLSLLPLNFFISK. Topologically, residues 472–533 are cytoplasmic; that stretch reads KRNHHQEEQM…ALRTSGLLFS (62 aa). The chain crosses the membrane as a helical span at residues 534 to 554; the sequence is VSLVSFQVSTFLVALVVFAVH. The Extracellular portion of the chain corresponds to 555–575; the sequence is TLVAENAMNAEKAFVTLTVLN. Residues 576–596 traverse the membrane as a helical segment; that stretch reads ILNKAQAFLPFSIHSLVQARV. Residues 597-939 are Cytoplasmic-facing; that stretch reads SFDRLVTFLC…VKATVHLAYL (343 aa). Residues 629–853 enclose the ABC transporter 1 domain; it reads ITIHSATFAW…KGALMCLLDQ (225 aa). 663–670 is a binding site for ATP; that stretch reads GPVGAGKS. The disordered stretch occupies residues 854-919; it reads ARQPGDRGEG…LDDPDRAGWP (66 aa). Over residues 881 to 901 the composition is skewed to basic and acidic residues; sequence RRPELRRERSIKSVPEKDRTT. The helical transmembrane segment at 940–960 threads the bilayer; it reads RAVGTPLCLYALFLFLCQQVA. The region spanning 947 to 1228 is the ABC transmembrane type-1 2 domain; the sequence is CLYALFLFLC…VVRNWTDLEN (282 aa). Over 961–997 the chain is Extracellular; that stretch reads SFCRGYWLSLWADDPAVGGQQTQAALRGGIFGLLGCL. The helical transmembrane segment at 998 to 1018 threads the bilayer; it reads QAIGLFASMAAVLLGGARASR. The Cytoplasmic portion of the chain corresponds to 1019-1061; that stretch reads LLFQRLLWDVVRSPISFFERTPIGHLLNRFSKETDTVDVDIPD. Residues 1062-1082 form a helical membrane-spanning segment; it reads KLRSLLMYAFGLLEVSLVVAV. A topological domain (extracellular) is located at residue Ala-1083. The chain crosses the membrane as a helical span at residues 1084-1104; that stretch reads TPLATVAILPLFLLYAGFQSL. Residues 1105–1175 lie on the Cytoplasmic side of the membrane; sequence YVVSSCQLRR…VADRWLAANV (71 aa). Residues 1176–1196 form a helical membrane-spanning segment; the sequence is ELLGNGLVFAAATCAVLSKAH. At 1197-1198 the chain is on the extracellular side; the sequence is LS. A helical membrane pass occupies residues 1199 to 1219; it reads AGLVGFSVSAALQVTQTLQWV. The Cytoplasmic segment spans residues 1220-1503; sequence VRNWTDLENS…YRLAQESGLV (284 aa). The ABC transporter 2 domain maps to 1265–1499; sequence IEFRDFGLRY…KGLFYRLAQE (235 aa). Ser-1286 is subject to Phosphoserine. 1299-1306 contributes to the ATP binding site; sequence GRTGAGKS.

It belongs to the ABC transporter superfamily. ABCC family. Conjugate transporter (TC 3.A.1.208) subfamily. Requires Mg(2+) as cofactor. In terms of processing, glycosylated. As to expression, expressed in kidney and liver. Very low expression in other tissues. In testis, localized to peritubular myoid cells, Leydig cells, along the basal membrane of Sertoli cells and moderately in the adluminal compartment of the seminiferous tubules.

Its subcellular location is the basal cell membrane. The protein resides in the basolateral cell membrane. The protein localises to the endoplasmic reticulum membrane. The catalysed reaction is an S-substituted glutathione(in) + ATP + H2O = an S-substituted glutathione(out) + ADP + phosphate + H(+). It catalyses the reaction leukotriene C4(in) + ATP + H2O = leukotriene C4(out) + ADP + phosphate + H(+). With respect to regulation, LTC4 transport is completely inhibited by 1 mM orthovanadate. ATP-dependent transporter of the ATP-binding cassette (ABC) family that actively extrudes physiological compounds, and xenobiotics from cells. Mediates ATP-dependent transport of glutathione conjugates such as leukotriene-c4 (LTC4) and N-ethylmaleimide S-glutathione (NEM-GS) (in vitro), and an anionic cyclopentapeptide endothelin antagonist, BQ-123. May contribute to regulate the transport of organic compounds in testes across the blood-testis-barrier. Does not appear to actively transport drugs outside the cell. Confers low levels of cellular resistance to etoposide, teniposide, anthracyclines and cisplatin. Its function is as follows. Mediates the release of nucleoside triphosphates, predominantly ATP, into the circulation, where it is rapidly converted into AMP and the mineralization inhibitor inorganic pyrophosphate (PPi) by the ecto-enzyme ectonucleotide pyrophosphatase phosphodiesterase 1 (ENPP1), therefore playing a role in PPi homeostasis. Functionally, inhibits TNF-alpha-mediated apoptosis through blocking one or more caspases. This is ATP-binding cassette sub-family C member 6 (ABCC6) from Homo sapiens (Human).